Consider the following 195-residue polypeptide: Protein LIGHT-DEPENDENT SHORT HYPOCOTYLS 7 (195 aa).

Disordered regions lie at residues 1 to 41 and 154 to 195; these read MASH…LSRY and SQAK…NLAS. Pro residues predominate over residues 21–36; sequence QPQPQPHQPQSPPNPP. The region spanning 40-167 is the ALOG domain; the sequence is RYESQKRRDW…ARGVPYKKRK (128 aa). Residues 162–175 are compositionally biased toward basic residues; it reads PYKKRKKRKKRNPM. Residues 165-169 carry the Nuclear localization signal motif; sequence KRKKR. Residues 184–195 are compositionally biased toward low complexity; the sequence is TTGTSSSSNLAS.

The protein belongs to the plant homeotic and developmental regulators ALOG protein family.

Its subcellular location is the nucleus. Functionally, probable transcription regulator that acts as a developmental regulator by promoting cell growth in response to light. In Arabidopsis thaliana (Mouse-ear cress), this protein is Protein LIGHT-DEPENDENT SHORT HYPOCOTYLS 7 (LSH7).